The following is a 308-amino-acid chain: Pycsar effector protein PaPycTIR (308 aa).

Residue 54–143 (LITEDAEDSE…RQVTRQLVDR (90 aa)) participates in a nucleoside 3',5'-cyclic phosphate binding. Positions 160–278 (VFIICSVEAL…DLKGLTTIGY (119 aa)) are TIR-like.

It localises to the cytoplasm. It carries out the reaction NAD(+) + H2O = ADP-D-ribose + nicotinamide + H(+). Pycsar (pyrimidine cyclase system for antiphage resistance) provides immunity against bacteriophage. The pyrimidine cyclase (PycC) synthesizes cyclic nucleotides in response to infection; these serve as specific second messenger signals. The signals activate the adjacent effector, leading to bacterial cell death and abortive phage infection. A clade A Pycsar system. In terms of biological role, the effector gene of a two-gene Pycsar system. Expression of this and adjacent uridylate cyclase PaPycC (AC P0DV40) probably confers resistance to bacteriophage. The genes are probably only expressed in response to bacteriophage infection. Probably only responds to cUMP (produced by its cognate NTP cyclase), acts by depleting cellular NAD(+) levels. The sequence is that of Pycsar effector protein PaPycTIR from Pseudomonas aeruginosa.